A 92-amino-acid polypeptide reads, in one-letter code: Large ribosomal subunit protein bL27 (92 aa).

Residues 1 to 9 (MIKANLQLF) constitute a propeptide that is removed on maturation.

It belongs to the bacterial ribosomal protein bL27 family. The N-terminus is cleaved by ribosomal processing cysteine protease Prp.

This Acetivibrio thermocellus (strain ATCC 27405 / DSM 1237 / JCM 9322 / NBRC 103400 / NCIMB 10682 / NRRL B-4536 / VPI 7372) (Clostridium thermocellum) protein is Large ribosomal subunit protein bL27.